A 441-amino-acid polypeptide reads, in one-letter code: Histidinol dehydrogenase homolog (441 aa).

Histidine 266 provides a ligand contact to Zn(2+). Active-site proton acceptor residues include glutamate 334 and histidine 335. Residue histidine 427 coordinates Zn(2+).

Belongs to the histidinol dehydrogenase family. It depends on Zn(2+) as a cofactor.

The sequence is that of Histidinol dehydrogenase homolog from Cereibacter sphaeroides (strain ATCC 17023 / DSM 158 / JCM 6121 / CCUG 31486 / LMG 2827 / NBRC 12203 / NCIMB 8253 / ATH 2.4.1.) (Rhodobacter sphaeroides).